Reading from the N-terminus, the 140-residue chain is ATP synthase epsilon chain (140 aa).

The protein belongs to the ATPase epsilon chain family. F-type ATPases have 2 components, CF(1) - the catalytic core - and CF(0) - the membrane proton channel. CF(1) has five subunits: alpha(3), beta(3), gamma(1), delta(1), epsilon(1). CF(0) has three main subunits: a, b and c.

The protein localises to the cell inner membrane. In terms of biological role, produces ATP from ADP in the presence of a proton gradient across the membrane. This is ATP synthase epsilon chain from Yersinia enterocolitica serotype O:8 / biotype 1B (strain NCTC 13174 / 8081).